A 303-amino-acid polypeptide reads, in one-letter code: Mycothiol acetyltransferase (303 aa).

N-acetyltransferase domains are found at residues 1–150 (MALL…RPLD) and 162–303 (VTIR…QFGR). Glu-18 lines the 1D-myo-inositol 2-(L-cysteinylamino)-2-deoxy-alpha-D-glucopyranoside pocket. 77 to 79 (LAV) is an acetyl-CoA binding site. 1D-myo-inositol 2-(L-cysteinylamino)-2-deoxy-alpha-D-glucopyranoside contacts are provided by Glu-189, Lys-229, and Glu-237. Acetyl-CoA is bound by residues 241-243 (VGV) and 248-254 (QGNGLGR). Tyr-275 is a binding site for 1D-myo-inositol 2-(L-cysteinylamino)-2-deoxy-alpha-D-glucopyranoside. 280 to 285 (NTAAIK) provides a ligand contact to acetyl-CoA.

The protein belongs to the acetyltransferase family. MshD subfamily. In terms of assembly, monomer.

The enzyme catalyses 1D-myo-inositol 2-(L-cysteinylamino)-2-deoxy-alpha-D-glucopyranoside + acetyl-CoA = mycothiol + CoA + H(+). Its function is as follows. Catalyzes the transfer of acetyl from acetyl-CoA to desacetylmycothiol (Cys-GlcN-Ins) to form mycothiol. This is Mycothiol acetyltransferase from Saccharopolyspora erythraea (strain ATCC 11635 / DSM 40517 / JCM 4748 / NBRC 13426 / NCIMB 8594 / NRRL 2338).